The chain runs to 348 residues: Protein RecA (348 aa).

65–72 contacts ATP; that stretch reads GPESSGKT.

Belongs to the RecA family.

It is found in the cytoplasm. In terms of biological role, can catalyze the hydrolysis of ATP in the presence of single-stranded DNA, the ATP-dependent uptake of single-stranded DNA by duplex DNA, and the ATP-dependent hybridization of homologous single-stranded DNAs. It interacts with LexA causing its activation and leading to its autocatalytic cleavage. The protein is Protein RecA of Vibrio anguillarum (strain ATCC 68554 / 775) (Listonella anguillarum).